A 605-amino-acid chain; its full sequence is UvrABC system protein C (605 aa).

One can recognise a GIY-YIG domain in the interval 13 to 92 (TSPGVYLMKD…IKKHHPKYNV (80 aa)). A UVR domain is found at 205 to 240 (SEIIQDLEKSIEKASQEQKFEQAGIYYRTLKLIQQA).

It belongs to the UvrC family. In terms of assembly, interacts with UvrB in an incision complex.

Its subcellular location is the cytoplasm. Its function is as follows. The UvrABC repair system catalyzes the recognition and processing of DNA lesions. UvrC both incises the 5' and 3' sides of the lesion. The N-terminal half is responsible for the 3' incision and the C-terminal half is responsible for the 5' incision. In Chlamydia caviae (strain ATCC VR-813 / DSM 19441 / 03DC25 / GPIC) (Chlamydophila caviae), this protein is UvrABC system protein C.